The primary structure comprises 451 residues: MGKYFGTDGVRGVANKELTPELAFKLGRYGGYVLAHNEDKKHPQVLVGRDTRVSGEMLESALIAGLISIGAEVMRLGVISTPGVAYLTKEMDAELGVMISASHNPVADNGIKFFGSDGFKLSDDQENEIEALLDEENPDLPRPVGNEIVHYSDYFEGAQKYLSYIKSTIDVNLDGLKIALDGANGSTSQLAPFLFGDLEADTEVIGCSPDGYNINEGVGSTHPEALAKTVVETESDFGLAFDGDGDRLIAVDEKGNIVDGDQIMFIIGQEMAKNQELNDNMIVSTVMSNLGFYKALEAEGIKSNKTKVGDRYVVEEMRKGNYNLGGEQSGHIVLMDYNTTGDGLLTGVQLAAVVKLTGKSLSELAEQMKKYPQSLINVRVTDKHGVTDNEDVKAEMDRVEADMNGEGRILVRPSGTEPLVRVMVEAATDEKAQSYAQQIADVVEEKMGLDN.

Serine 102 functions as the Phosphoserine intermediate in the catalytic mechanism. Positions 102, 242, 244, and 246 each coordinate Mg(2+). A Phosphoserine modification is found at serine 102.

This sequence belongs to the phosphohexose mutase family. The cofactor is Mg(2+). Post-translationally, activated by phosphorylation.

The enzyme catalyses alpha-D-glucosamine 1-phosphate = D-glucosamine 6-phosphate. Its function is as follows. Catalyzes the conversion of glucosamine-6-phosphate to glucosamine-1-phosphate. The protein is Phosphoglucosamine mutase of Staphylococcus carnosus (strain TM300).